Consider the following 396-residue polypeptide: Elongation factor Tu (396 aa).

The tr-type G domain occupies 10–206 (KPHCNIGTIG…AVDSYIPQPE (197 aa)). A G1 region spans residues 19–26 (GHVDHGKT). 19–26 (GHVDHGKT) contributes to the GTP binding site. Mg(2+) is bound at residue threonine 26. The G2 stretch occupies residues 60–64 (GITIS). The interval 81–84 (DCPG) is G3. GTP is bound by residues 81 to 85 (DCPGH) and 136 to 139 (NKCD). A G4 region spans residues 136–139 (NKCD). A G5 region spans residues 174-176 (SAL).

It belongs to the TRAFAC class translation factor GTPase superfamily. Classic translation factor GTPase family. EF-Tu/EF-1A subfamily. As to quaternary structure, monomer.

Its subcellular location is the cytoplasm. It catalyses the reaction GTP + H2O = GDP + phosphate + H(+). GTP hydrolase that promotes the GTP-dependent binding of aminoacyl-tRNA to the A-site of ribosomes during protein biosynthesis. The protein is Elongation factor Tu of Rhodopseudomonas palustris (strain BisA53).